Reading from the N-terminus, the 87-residue chain is Small ribosomal subunit protein bS18 (87 aa).

This sequence belongs to the bacterial ribosomal protein bS18 family. As to quaternary structure, part of the 30S ribosomal subunit. Forms a tight heterodimer with protein bS6.

Its function is as follows. Binds as a heterodimer with protein bS6 to the central domain of the 16S rRNA, where it helps stabilize the platform of the 30S subunit. The protein is Small ribosomal subunit protein bS18 of Oleidesulfovibrio alaskensis (strain ATCC BAA-1058 / DSM 17464 / G20) (Desulfovibrio alaskensis).